A 540-amino-acid polypeptide reads, in one-letter code: MTFIIKKVKNIFSTKKINNKTNNNNFKNENLNIKNEILNNNNNNNNNKNNNNNNNNNNNIENNSKNENFNNFNKIHNSPISSPNLSPSLNSIDSINLNKIIIQNIDNFETNGNILNTSSPSLNSSVAKNNFIISDIQDIDWNNLVNIELLNNNINNNNNTNNNNNNNIIILVTFYNGYDDFNQVILKSSNTMVQDVYASVLQVILKYPVPEMRLIDSCEEEFNKMSINLLKQSKLQSEQLFNIIQTQIEKPFFLIMEYKNGGKFFSQLNHKEYFSSQKNGEKKLKQLGKLLSFDLICNINNNICNFNYNNCNNNNNNNNNNNNNNNNNNNNNNNNNNINNCNNNNNNNISLNNSNNNLNSIFNNNNFNIFSNIIFYEQPDKNGWYFGIIHSSILCLNSSSFTPGYRNTMDRIKLLLFSIFQNPTTESLQIYHFRKYLSNNCNINLPSSSVHWSTNIQNGIAKGIDELVNSLNYQVFASTKQIVNNMIFSTTDQNNNNVIINNNNSFTWKKGIDLIYIPFLFDVLKEIIIEHSNYKNKSKK.

A coiled-coil region spans residues Lys27–Asn68. Disordered regions lie at residues Ile37–Asn70 and Asn317–Cys341.

The protein belongs to the protein kinase superfamily. AFK Ser/Thr protein kinase family.

In Dictyostelium discoideum (Social amoeba), this protein is Putative actin-fragmin kinase DDB_G0287957.